Here is a 98-residue protein sequence, read N- to C-terminus: MTPLNINLTMAFFLALAGVLIYRSHLMSTLLCLEGMMLSLFILLSLLISHFHMLSSSMAPLILLVFSACEAGVGLALLVKMSSNYGNDYVQNLNLLQC.

The next 3 helical transmembrane spans lie at 1 to 21, 28 to 48, and 59 to 79; these read MTPL…GVLI, STLL…SLLI, and APLI…ALLV.

Belongs to the complex I subunit 4L family. Core subunit of respiratory chain NADH dehydrogenase (Complex I) which is composed of 45 different subunits.

It localises to the mitochondrion inner membrane. It carries out the reaction a ubiquinone + NADH + 5 H(+)(in) = a ubiquinol + NAD(+) + 4 H(+)(out). Functionally, core subunit of the mitochondrial membrane respiratory chain NADH dehydrogenase (Complex I) which catalyzes electron transfer from NADH through the respiratory chain, using ubiquinone as an electron acceptor. Part of the enzyme membrane arm which is embedded in the lipid bilayer and involved in proton translocation. This chain is NADH-ubiquinone oxidoreductase chain 4L (MT-ND4L), found in Tarsipes rostratus (Honey possum).